The chain runs to 520 residues: Sterile alpha motif domain-containing protein 3 (520 aa).

The SAM domain occupies 4–71 (WSVEQVCSWL…KYKQNTQGLK (68 aa)). Positions 85 to 114 (TEAARDYRDEESSSPARHGEQMPSFYPAEN) are disordered.

The polypeptide is Sterile alpha motif domain-containing protein 3 (SAMD3) (Homo sapiens (Human)).